Here is a 456-residue protein sequence, read N- to C-terminus: Keratin, type I cuticular Ha8 (456 aa).

The tract at residues 1 to 104 (MTSSYSSSSC…YGENTLNGHE (104 aa)) is head. Positions 104-415 (EKETMQFLND…NLLESEDCKL (312 aa)) constitute an IF rod domain. Residues 105 to 139 (KETMQFLNDRLANYLEKVRQLEQENAELEATLLER) are coil 1A. The segment at 140–150 (SKCHESTVCPD) is linker 1. The interval 151–251 (YQSYFHTIEE…HEQEVKILRS (101 aa)) is coil 1B. Residues 252-267 (QLGEKLRIELDIEPTI) form a linker 12 region. The tract at residues 268–411 (DLNRVLGEMR…ATYRNLLESE (144 aa)) is coil 2. Positions 412 to 456 (DCKLPCNPCSTSPSCVTAPCAPRPSCGPCTTCGPTCGASTTGSRF) are tail.

Belongs to the intermediate filament family.

The chain is Keratin, type I cuticular Ha8 (KRT38) from Homo sapiens (Human).